The sequence spans 141 residues: Hemoglobin subunit alpha-1/2 (141 aa).

Residues Val-1–Arg-141 enclose the Globin domain. The residue at position 3 (Ser-3) is a Phosphoserine. Lys-7 is modified (N6-succinyllysine). Residue Thr-8 is modified to Phosphothreonine. At Lys-11 the chain carries N6-succinyllysine. Lys-16 carries the post-translational modification N6-acetyllysine; alternate. Lys-16 bears the N6-succinyllysine; alternate mark. Tyr-24 bears the Phosphotyrosine mark. Ser-35 is modified (phosphoserine). Lys-40 is subject to N6-succinyllysine. Residue Ser-49 is modified to Phosphoserine. His-58 provides a ligand contact to O2. Residue His-87 participates in heme b binding. Residue Ser-102 is modified to Phosphoserine. A Phosphothreonine modification is found at Thr-108. Ser-124 carries the post-translational modification Phosphoserine. Phosphothreonine is present on residues Thr-134 and Thr-137. Ser-138 is modified (phosphoserine).

The protein belongs to the globin family. In terms of assembly, heterotetramer of two alpha chains and two beta chains. In terms of tissue distribution, red blood cells.

Involved in oxygen transport from the lung to the various peripheral tissues. The sequence is that of Hemoglobin subunit alpha-1/2 from Mustela putorius (European polecat).